The following is an 82-amino-acid chain: MIKKLLIYFVRFYQYTLSPLLGLTCRFYPTCSEYMILALQKHGAMKGAYLGVKRICRCHPWNPGGHDPVPESTILSKEKSVK.

The segment at Pro63–Lys82 is disordered.

This sequence belongs to the UPF0161 family.

It localises to the cell inner membrane. In terms of biological role, could be involved in insertion of integral membrane proteins into the membrane. This is Putative membrane protein insertion efficiency factor from Protochlamydia amoebophila (strain UWE25).